Here is a 926-residue protein sequence, read N- to C-terminus: Translation initiation factor IF-2 (926 aa).

2 disordered regions span residues 1-185 (MTDS…EEVE) and 200-299 (EDKA…RRRG). Low complexity-rich tracts occupy residues 13 to 24 (TGKKTLTLKPTG) and 70 to 96 (APAT…AAPQ). Over residues 110–133 (TNQYSQQRHPGQQNRPQASSQPSR) the composition is skewed to polar residues. A compositionally biased stretch (basic and acidic residues) spans 151-185 (MDARRRALAEAQVREVEDAKRRAEEEVRRQAEEVE). Low complexity predominate over residues 211–251 (APEPVAEPVAPVAETPRAADPAPRAPSPAGAKPAAGAPAPS). Positions 424-591 (SRPPVVTIMG…AVLLQAEILD (168 aa)) constitute a tr-type G domain. Residues 433–440 (GHVDHGKT) are G1. A GTP-binding site is contributed by 433-440 (GHVDHGKT). Residues 458–462 (GITQH) are G2. A G3 region spans residues 479 to 482 (DTPG). GTP contacts are provided by residues 479–483 (DTPGH) and 533–536 (NKID). A G4 region spans residues 533–536 (NKID). A G5 region spans residues 569-571 (SAK).

It belongs to the TRAFAC class translation factor GTPase superfamily. Classic translation factor GTPase family. IF-2 subfamily.

The protein localises to the cytoplasm. Functionally, one of the essential components for the initiation of protein synthesis. Protects formylmethionyl-tRNA from spontaneous hydrolysis and promotes its binding to the 30S ribosomal subunits. Also involved in the hydrolysis of GTP during the formation of the 70S ribosomal complex. This is Translation initiation factor IF-2 from Allorhizobium ampelinum (strain ATCC BAA-846 / DSM 112012 / S4) (Agrobacterium vitis (strain S4)).